The sequence spans 184 residues: tRNA (cytidine(56)-2'-O)-methyltransferase (184 aa).

Residues leucine 87, 112–116 (GAEKV), and 130–137 (VANQPHSE) each bind S-adenosyl-L-methionine.

This sequence belongs to the aTrm56 family. In terms of assembly, homodimer.

Its subcellular location is the cytoplasm. It carries out the reaction cytidine(56) in tRNA + S-adenosyl-L-methionine = 2'-O-methylcytidine(56) in tRNA + S-adenosyl-L-homocysteine + H(+). Specifically catalyzes the AdoMet-dependent 2'-O-ribose methylation of cytidine at position 56 in tRNAs. In Methanocorpusculum labreanum (strain ATCC 43576 / DSM 4855 / Z), this protein is tRNA (cytidine(56)-2'-O)-methyltransferase.